Consider the following 445-residue polypeptide: N-succinylarginine dihydrolase (445 aa).

Substrate is bound by residues 19 to 28 (AGLSFGNVAS), Asn110, and 137 to 138 (HR). The active site involves Glu174. Arg214 lines the substrate pocket. The active site involves His250. Substrate-binding residues include Asp252 and Asn363. Residue Cys369 is the Nucleophile of the active site.

The protein belongs to the succinylarginine dihydrolase family. In terms of assembly, homodimer.

The catalysed reaction is N(2)-succinyl-L-arginine + 2 H2O + 2 H(+) = N(2)-succinyl-L-ornithine + 2 NH4(+) + CO2. Its pathway is amino-acid degradation; L-arginine degradation via AST pathway; L-glutamate and succinate from L-arginine: step 2/5. Its function is as follows. Catalyzes the hydrolysis of N(2)-succinylarginine into N(2)-succinylornithine, ammonia and CO(2). The chain is N-succinylarginine dihydrolase from Shewanella woodyi (strain ATCC 51908 / MS32).